The following is a 1119-amino-acid chain: Solute carrier family 38 member 10 (1119 aa).

10 helical membrane passes run 4 to 24 (AAASNWGLITNIVNSIVGVSV), 36 to 58 (IVLGALLLVFCSWMTHQSCMFLV), 84 to 104 (LVETSMIGLMLGTCIAFYVVI), 120 to 140 (VGGTFRMFLLFAVSLCIVLPL), 153 to 173 (FSAMALLFYTVFMFVIVLSSL), 229 to 249 (IFASSLNVVTTFYVMVGFFGY), 272 to 292 (MLRVGFMMSVAVGFPMMILPC), 323 to 343 (ALTLSVVFGTMVGGILIPNVE), 345 to 365 (ILGLTGATMGSLICFICPALI), and 378 to 398 (VVLWVGLGVLVVSTVTTLSVS). 2 disordered regions span residues 438-691 (AEDG…EEAG) and 731-1071 (KEIH…DGVI). Composition is skewed to basic and acidic residues over residues 439–454 (EDGREKPKLPKEREEL), 466–475 (PGREDGKEAP), 493–522 (EAHRHEPPVPHDKVVVDEGQDREVPEENKP), 544–559 (DSEREKQEPEQGEVGK), and 592–603 (AKEDLGPGDRGL). Serine 612 is modified (phosphoserine). The segment covering 652–667 (PPLPAEKPAPGPGLPP) has biased composition (pro residues). Composition is skewed to basic and acidic residues over residues 668–677 (EPREQRDVER), 731–752 (KEIHQQRQEDEEDKPRQVEVHQ), and 763–773 (EAPEGKARETV). Threonine 772 is modified (phosphothreonine). Serine 802 carries the phosphoserine modification. 2 stretches are compositionally biased toward basic and acidic residues: residues 832–841 (KLRDGQKDAA) and 863–876 (PAREAGGPEERLAE). Residues 880–889 (GQSQDVTGGS) show a composition bias toward polar residues. Phosphoserine occurs at positions 889, 965, and 997. Composition is skewed to basic and acidic residues over residues 975–1005 (HRLDHGGHLEMRKARGGDHVPVSHEQPRGGE), 1012–1022 (PRQRPEPELGL), and 1033–1042 (DNAKPNRDLK).

The protein belongs to the amino acid/polyamine transporter 2 family.

It localises to the membrane. It carries out the reaction L-glutamate(out) = L-glutamate(in). The enzyme catalyses L-glutamine(out) = L-glutamine(in). It catalyses the reaction L-alanine(in) = L-alanine(out). The catalysed reaction is L-serine(in) = L-serine(out). It carries out the reaction L-leucine(in) = L-leucine(out). Functionally, facilitates bidirectional transport of amino acids. May act as a glutamate sensor that regulates glutamate-glutamine cycle and mTOR signaling in the brain. The transport mechanism remains to be elucidated. The chain is Solute carrier family 38 member 10 from Homo sapiens (Human).